A 1284-amino-acid polypeptide reads, in one-letter code: ATP-dependent helicase fft2 (1284 aa).

Polar residues-rich tracts occupy residues 1–10 and 20–57; these read MLPYNSNYLS and ENPQ…AMYG. Disordered regions lie at residues 1–57, 185–252, 317–339, 353–388, and 446–465; these read MLPY…AMYG, AQPP…LPPV, KQSP…QSQK, STQA…EEPE, and PDDV…KNPM. Over residues 201 to 241 the composition is skewed to low complexity; that stretch reads RSNSRSSARSTARSAPRSTQRSRSSSANPVTTPPVNNTLLT. 2 stretches are compositionally biased toward polar residues: residues 320 to 339 and 353 to 372; these read PVAS…QSQK and STQA…ASKK. A Phosphoserine modification is found at Ser323. The span at 376 to 388 shows a compositional bias: acidic residues; sequence EEDEFYDSEEEPE. Position 383 is a phosphoserine (Ser383). The 169-residue stretch at 562 to 730 folds into the Helicase ATP-binding domain; it reads HLLYQQKLSG…VSLLAFILPN (169 aa). Residue 575-582 coordinates ATP; the sequence is DEMGLGKT. The short motif at 681–684 is the DEGH box element; it reads DEGH. Residues 816-839 are disordered; sequence QQLRRDDKRNKRSKNDEESDGKSL. The segment covering 818 to 831 has biased composition (basic and acidic residues); the sequence is LRRDDKRNKRSKND. Positions 928–1079 constitute a Helicase C-terminal domain; sequence VLKELLPKMK…SLSSDGKDRE (152 aa). The disordered stretch occupies residues 1088 to 1284; sequence DMLDEENNGN…SEVDNNAAKD (197 aa). The span at 1095 to 1107 shows a compositional bias: polar residues; sequence NGNNTKPEITGNE. Residues 1143–1177 show a composition bias toward basic and acidic residues; sequence EKTDLADGDEKANIKTEMKSETVEGDNKELRETMK. A compositionally biased stretch (polar residues) spans 1180 to 1194; it reads NVQTDSNAAVPSSKS. Basic and acidic residues-rich tracts occupy residues 1243–1256 and 1266–1284; these read QLEK…KKPD and EEEK…AAKD.

The protein belongs to the SNF2/RAD54 helicase family.

It localises to the cytoplasm. The protein localises to the nucleus. It carries out the reaction ATP + H2O = ADP + phosphate + H(+). DNA helicase that possesses intrinsic ATP-dependent nucleosome-remodeling activity and is required for heterochromatin organization. The polypeptide is ATP-dependent helicase fft2 (fft2) (Schizosaccharomyces pombe (strain 972 / ATCC 24843) (Fission yeast)).